We begin with the raw amino-acid sequence, 81 residues long: Delta-conotoxin PVIA (81 aa).

The first 22 residues, 1-22, serve as a signal peptide directing secretion; that stretch reads MKLTCVMIVAVLFLTAWTFVTA. Positions 23 to 49 are excised as a propeptide; sequence DDSKNGLENHFWKARDEMKNREASKLD. 3 disulfide bridges follow: Cys54/Cys69, Cys61/Cys73, and Cys68/Cys78. 4-hydroxyproline is present on residues Pro57 and Pro65. Gly80 is modified (glycine amide; in form delta-conotoxin PVIA).

The difference between delta-conotoxin PVIA and [deamido]-delta-conotoxin PVIA lies in the state of amidation of Gly-80. In terms of tissue distribution, expressed by the venom duct.

It is found in the secreted. Its function is as follows. Delta-conotoxins bind to site 6 of voltage-gated sodium channels (Nav) and inhibit the inactivation process. This toxin shows weak effects on rNav1.2/SCN2A (EC(50)=2.9 uM), rNav1.4/SCN4A (EC(50)=5.2 uM), hNav1.7/SCN9A (EC(50)=1.9 uM) and rNav1.7/SCN9A (EC(50)=6.4 uM). In vivo, this toxin shows different effects. In mice, injection of this toxin causes hyperactivity, rapid running, limb extension, and death. In fish, the peptide elicites spurts of rapid swimming, with twisted motions, quivering fins and the lockjaw extended mouth syndrome. Rigid paralysis and death are observed at higher doses. In mollusks, this peptide is inactive. Injection of this peptide together with the kappa-conotoxin PVIIA causes the sudden tetanus of prey (STOP) syndrome, which is a single, lethal 'fin-pop' in envenomed fish. This chain is Delta-conotoxin PVIA, found in Conus purpurascens (Purple cone).